A 247-amino-acid chain; its full sequence is Protein FAM133B (247 aa).

Disordered stretches follow at residues 19–38 and 70–247; these read SRGPIQSSGPTIQDYLNRPR and KKEL…PDSP. Over residues 70 to 80 the composition is skewed to basic and acidic residues; it reads KKELEKHREKL. S82 carries the phosphoserine modification. Positions 89–102 are enriched in basic residues; it reads KKRQRKKKEKKKSG. A compositionally biased stretch (low complexity) spans 103 to 119; that stretch reads RYSSSSSSSSDSSSSSS. Residues 128-140 are compositionally biased toward basic residues; the sequence is QGKRRKKKKNRSH. The span at 165 to 176 shows a compositional bias: basic and acidic residues; the sequence is KDGTEKEKDIKG. S191, S192, S194, and S196 each carry phosphoserine. The span at 211–221 shows a compositional bias: basic and acidic residues; the sequence is SSEEREKATEK. Residues 222–239 show a composition bias toward basic residues; it reads TKKKKKHKKHSKKKKKKA.

This sequence belongs to the FAM133 family.

The polypeptide is Protein FAM133B (FAM133B) (Homo sapiens (Human)).